The chain runs to 281 residues: Gas vesicle protein L1 (281 aa).

It belongs to the gas vesicle GvpF/GvpL family. May form oligomers. GvpF to GvpM interact with each other in vitro, and may form multi-subunit complex(es). Interacts with GvpC1, GvpN1 and GvpO1.

The protein localises to the gas vesicle. The protein resides in the cytoplasm. Its function is as follows. Proteins GvpF to GvpM might be involved in nucleating gas vesicle formation. A minor component of the gas vesicle. This the only minor gas vesicle protein that binds all the others (including GvpC1, GvpN1 and GvpO1, but not GvpA1), suggesting it might be able to assemble them. Gas vesicles are hollow, gas filled proteinaceous nanostructures found in several microbial planktonic microorganisms. They allow positioning of halobacteria at the optimal depth for growth in the poorly aerated, shallow brine pools of their habitat. In terms of biological role, expression of a 9.5 kb p-vac DNA fragment containing 2 divergently transcribed regions (gvpD-gvpE-gvpF-gvpG-gvpH-gvpI-gvpJ-gvpK-gvpL-gvpM and gvpA-gvpC-gvpN-gvpO) allows H.volcanii to produce gas vesicles. A minimal gas vesicle can be made in H.volcanii by gvpA1-gvpO1 plus gvpF1-gvpG1-gvpJ1-gvpK1-gvpL1-gvpM1; lack of enough GvpJ1 prevents their formation. A similar region restores gas vesicle production in H.halobium without the p-vac locus, but it still has the c-vac locus. The sequence is that of Gas vesicle protein L1 (gvpL11) from Halobacterium salinarum (strain ATCC 700922 / JCM 11081 / NRC-1) (Halobacterium halobium).